A 334-amino-acid chain; its full sequence is Amino acid--[acyl-carrier-protein] ligase 2 (334 aa).

A Zn(2+)-binding site is contributed by Cys131. Residues Arg159, Glu161, and 168 to 169 (RL) contribute to the ATP site. Glu176 serves as a coordination point for Zn(2+). Position 176 (Glu176) interacts with an L-alpha-amino acid. Residues Lys235 and 250–253 (ACMS) each bind ATP. Cys279 is a Zn(2+) binding site. ATP is bound at residue Arg286.

The protein belongs to the class-II aminoacyl-tRNA synthetase family. Amino acid--[acyl-carrier-protein] ligase subfamily. In terms of assembly, homodimer. Zn(2+) serves as cofactor.

It catalyses the reaction an L-alpha-amino acid + holo-[ACP] + ATP = an L-alpha-aminoacyl-[ACP] + AMP + diphosphate. Functionally, catalyzes the ATP-dependent activation of L-glycine and its transfer to the phosphopantetheine prosthetic group covalently attached to the vicinal carrier protein blr6284 of yet unknown function. May participate in nonribosomal peptide synthesis or related processes. L-alanine is a poor substrate whereas L-serine or D-amino acids are not substrates for ATP-dependent activation. Does not display tRNA aminoacylation activity. This Bradyrhizobium diazoefficiens (strain JCM 10833 / BCRC 13528 / IAM 13628 / NBRC 14792 / USDA 110) protein is Amino acid--[acyl-carrier-protein] ligase 2.